The following is a 503-amino-acid chain: MQALPLGLQLALLVAAGAGARVSAPRSLAWGPGLQAAAVLPVRYFFLQSVDSDGRNFTSSPPGQTQFKVVVKSLSPKELVRIYVPKPLDRNDGTFLVRYRMHETAHKGLKIEILHGSEHVAHSPYILKGPVYHEYCDCPEDDPQVWQETLSCPASEPQIEQDFVSFPSINLQQMLKEVPTRFGDERGAVVHYTILNNHIYRRSLGKYTDFKMFSDEILLSLARKVTLPDLEFYINLGDWPLEHRKVNDTPGPIPIISWCGSLDSRDIILPTYDVTHSTLEAMRGVTNDLLSVQGNTGPSWINKTEKAFFRGRDSREERLQLVLLSKENPQLLDAGITGYFFFQEKEKELGKAKLMGFFDFFKYKYQVNVDGTVAAYRYPYLMLGDSLVLKQESPYYEHFYVALKPWKHYVPIKRNLGDLLEKVKWAKENDEEAKKIAKEGQLTARDLLQPPRLYCYYYRVLQKYAERQASKPMIRDGMELVPQPDDGTSICQCHRRRPEREEL.

The signal sequence occupies residues 1 to 19 (MQALPLGLQLALLVAAGAG). The Filamin repeat unit spans residues 19–129 (GARVSAPRSL…VAHSPYILKG (111 aa)). N-linked (GlcNAc...) asparagine glycosylation is found at N56 and N302. A Prevents secretion from ER motif is present at residues 500–503 (REEL).

Belongs to the KDELC family.

Its subcellular location is the endoplasmic reticulum lumen. The catalysed reaction is L-seryl-[EGF-like domain protein] + UDP-alpha-D-glucose = 3-O-(beta-D-glucosyl)-L-seryl-[EGF-like domain protein] + UDP + H(+). The enzyme catalyses L-seryl-[EGF-like domain protein] + UDP-alpha-D-xylose = 3-O-(beta-D-xylosyl)-L-seryl-[EGF-like domain protein] + UDP + H(+). The protein operates within protein modification; protein glycosylation. Functionally, protein glucosyltransferase that catalyzes the transfer of glucose from UDP-glucose to a serine residue within the consensus sequence peptide C-X-N-T-X-G-S-F-X-C. Can also catalyze the transfer of xylose from UDP-xylose but less efficiently. Specifically targets extracellular EGF repeats of proteins such as NOTCH1, NOTCH3, FBN1, FBN2 and LTBP1. May regulate the transport of NOTCH1 and NOTCH3 to the plasma membrane and thereby the Notch signaling pathway. The polypeptide is Protein O-glucosyltransferase 3 (Poglut3) (Mus musculus (Mouse)).